The primary structure comprises 195 residues: Probable GTP-binding protein EngB (195 aa).

The 172-residue stretch at 24–195 (GLSEVALSGR…QIWDLIANYL (172 aa)) folds into the EngB-type G domain. GTP is bound by residues 32 to 39 (GRSNVGKS), 59 to 63 (GKTQT), 77 to 80 (DVPG), 144 to 147 (TKED), and 176 to 178 (YSS). Residues serine 39 and threonine 61 each coordinate Mg(2+).

This sequence belongs to the TRAFAC class TrmE-Era-EngA-EngB-Septin-like GTPase superfamily. EngB GTPase family. Mg(2+) serves as cofactor.

Necessary for normal cell division and for the maintenance of normal septation. This chain is Probable GTP-binding protein EngB, found in Staphylococcus haemolyticus (strain JCSC1435).